A 305-amino-acid polypeptide reads, in one-letter code: MENKPPVINLPEKETVNTPQKGGKFTINDFEIGRPLGKGKFGSVYLARTKTGHFHVAIKVLFKSQLISGGVEHQLEREIEIQSHLNHPNIIKLYTYFWDAKKIYLVLEYAPGGEMYKQLTVSKRFSEPTAAKYMYEIADALSYCHRKNVIHRDIKPENLLIGSQGELKIGDFGWSVHAPSNKRQTMCGTMDYLPPEMVNGADHSDAVDLWAIGVLCYEFLVGKPPFEHEDQSKTYAAIKAARFTYPDSVKKGARDLIGRLLVVDPKARCTLEQVKEHYWIQGMMEAKIRAEKQQKIEKEASLRNH.

The region spanning F30–I280 is the Protein kinase domain. ATP contacts are provided by residues L36–V44 and K59. Catalysis depends on D153, which acts as the Proton acceptor.

It belongs to the protein kinase superfamily. Ser/Thr protein kinase family. Aurora subfamily. Component of the CPC complex which consists of icp-1; csc-1; bir-1 and air-2. Within the complex, interacts with icp-1; csc-1 and bir-1. Interacts with zen-4. Interacts with tlk-1 and bmk-1. In terms of processing, phosphorylated. Increased phosphorylation upon chromatin obstructions at anaphase.

It is found in the cytoplasm. The protein resides in the cytoskeleton. The protein localises to the chromosome. It localises to the midbody. Its subcellular location is the spindle. It catalyses the reaction L-seryl-[protein] + ATP = O-phospho-L-seryl-[protein] + ADP + H(+). The catalysed reaction is L-threonyl-[protein] + ATP = O-phospho-L-threonyl-[protein] + ADP + H(+). In terms of biological role, serine/threonine-protein kinase component of the chromosomal passenger complex (CPC), a complex that acts as a key regulator of chromosome segregation and cytokinesis. The CPC complex has essential functions at the centromere in ensuring correct chromosome alignment and segregation. Required for histone H3 phosphorylation during segregation of homologous chromosomes in meiosis and mitosis. Required for histone H3 'Ser-10' phosphorylation. Phosphorylates tlk-1 at 'Ser-634', which enhances its activity. Phosphorylates zen-4 at 'Ser-680'. Required for the recruitment of bub-1 to the ring-shaped domain between chromosomes during meiotic anaphase I. Also required for the localization of the condensin I complex subunit smc-4 to mitotic chromosomes. Acts at the spindle midzone and the midbody to prevent cleavage furrow regression upon chromatin obstructions during cytokinesis. This chain is Aurora/IPL1-related protein kinase 2, found in Caenorhabditis elegans.